The following is a 268-amino-acid chain: Ribosomal RNA small subunit methyltransferase A (268 aa).

S-adenosyl-L-methionine-binding residues include Asn-17, Leu-19, Gly-44, Glu-65, Asp-89, and Asn-110.

The protein belongs to the class I-like SAM-binding methyltransferase superfamily. rRNA adenine N(6)-methyltransferase family. RsmA subfamily.

It localises to the cytoplasm. The enzyme catalyses adenosine(1518)/adenosine(1519) in 16S rRNA + 4 S-adenosyl-L-methionine = N(6)-dimethyladenosine(1518)/N(6)-dimethyladenosine(1519) in 16S rRNA + 4 S-adenosyl-L-homocysteine + 4 H(+). In terms of biological role, specifically dimethylates two adjacent adenosines (A1518 and A1519) in the loop of a conserved hairpin near the 3'-end of 16S rRNA in the 30S particle. May play a critical role in biogenesis of 30S subunits. This Acidithiobacillus ferrooxidans (strain ATCC 53993 / BNL-5-31) (Leptospirillum ferrooxidans (ATCC 53993)) protein is Ribosomal RNA small subunit methyltransferase A.